The chain runs to 333 residues: BRISC and BRCA1-A complex member 1 (333 aa).

At Met1 the chain carries N-acetylmethionine. The interval 1–85 (MEVAEANSPT…PWQVPASASE (85 aa)) is disordered. Position 8 is a phosphoserine (Ser8). Over residues 10–24 (TEEEEEEEEEGEETI) the composition is skewed to acidic residues. A phosphoserine mark is found at Ser33 and Ser53. Over residues 58–67 (EAATADGGAA) the composition is skewed to low complexity. The segment at 99-302 (VIICLDLSEE…LELHNCMAKL (204 aa)) is VWFA-like.

This sequence belongs to the BABAM1 family. In terms of assembly, component of the ARISC complex, at least composed of UIMC1/RAP80, ABRAXAS1, BRCC3/BRCC36, BABAM2 and BABAM1/NBA1. Component of the BRCA1-A complex, at least composed of BRCA1, BARD1, UIMC1/RAP80, ABRAXAS1, BRCC3/BRCC36, BABAM2 and BABAM1/NBA1. In the BRCA1-A complex, interacts directly with ABRAXAS1 and BABAM2. Component of the BRISC complex, at least composed of ABRAXAS2, BRCC3/BRCC36, BABAM2 and BABAM1/NBA1. Identified in a complex with SHMT2 and the other subunits of the BRISC complex.

It localises to the cytoplasm. The protein resides in the nucleus. Its function is as follows. Component of the BRCA1-A complex, a complex that specifically recognizes 'Lys-63'-linked ubiquitinated histones H2A and H2AX at DNA lesions sites, leading to target the BRCA1-BARD1 heterodimer to sites of DNA damage at double-strand breaks (DSBs). The BRCA1-A complex also possesses deubiquitinase activity that specifically removes 'Lys-63'-linked ubiquitin on histones H2A and H2AX. In the BRCA1-A complex, it is required for the complex integrity and its localization at DSBs. Component of the BRISC complex, a multiprotein complex that specifically cleaves 'Lys-63'-linked ubiquitin in various substrates. In these 2 complexes, it is probably required to maintain the stability of BABAM2 and help the 'Lys-63'-linked deubiquitinase activity mediated by BRCC3/BRCC36 component. The BRISC complex is required for normal mitotic spindle assembly and microtubule attachment to kinetochores via its role in deubiquitinating NUMA1. Plays a role in interferon signaling via its role in the deubiquitination of the interferon receptor IFNAR1; deubiquitination increases IFNAR1 activity by enhancing its stability and cell surface expression. Down-regulates the response to bacterial lipopolysaccharide (LPS) via its role in IFNAR1 deubiquitination. The sequence is that of BRISC and BRCA1-A complex member 1 (Babam1) from Mus musculus (Mouse).